Reading from the N-terminus, the 264-residue chain is Indole-3-glycerol phosphate synthase (264 aa).

This sequence belongs to the TrpC family.

The catalysed reaction is 1-(2-carboxyphenylamino)-1-deoxy-D-ribulose 5-phosphate + H(+) = (1S,2R)-1-C-(indol-3-yl)glycerol 3-phosphate + CO2 + H2O. It participates in amino-acid biosynthesis; L-tryptophan biosynthesis; L-tryptophan from chorismate: step 4/5. In Xylella fastidiosa (strain M12), this protein is Indole-3-glycerol phosphate synthase.